A 511-amino-acid chain; its full sequence is Fas-activated serine/threonine kinase (511 aa).

The RAP domain occupies 439-497 (VVLMLRERWHFCRDGRVLLGSRALRERHLGLMGYQLLPLPFEELESQRGLPQLKSYLRQ).

Belongs to the FAST protein kinase family. Interacts with TIA1; the interactions leads to TIA1 phosphorylation. Interacts with TIAR. Post-translationally, autophosphorylated on serine/threonine residues. Activated by dephosphorylation.

It is found in the mitochondrion matrix. The enzyme catalyses L-seryl-[Fas-activated protein] + ATP = O-phospho-L-seryl-[Fas-activated protein] + ADP + H(+). It catalyses the reaction L-threonyl-[Fas-activated protein] + ATP = O-phospho-L-threonyl-[Fas-activated protein] + ADP + H(+). The catalysed reaction is L-seryl-[protein] + ATP = O-phospho-L-seryl-[protein] + ADP + H(+). It carries out the reaction L-threonyl-[protein] + ATP = O-phospho-L-threonyl-[protein] + ADP + H(+). In terms of biological role, phosphorylates the splicing regulator TIA1, thereby promoting the inclusion of FAS exon 6, which leads to an mRNA encoding a pro-apoptotic form of the receptor. Required for the biogenesis of some mitochondrial-encoded mRNAs, specifically stabilizes ND6 (NADH dehydrogenase complex subunit 6) mRNA, and regulates its levels. This is Fas-activated serine/threonine kinase (Fastk) from Mus musculus (Mouse).